Here is a 105-residue protein sequence, read N- to C-terminus: Large ribosomal subunit protein uL24 (105 aa).

Belongs to the universal ribosomal protein uL24 family. As to quaternary structure, part of the 50S ribosomal subunit.

In terms of biological role, one of two assembly initiator proteins, it binds directly to the 5'-end of the 23S rRNA, where it nucleates assembly of the 50S subunit. One of the proteins that surrounds the polypeptide exit tunnel on the outside of the subunit. The sequence is that of Large ribosomal subunit protein uL24 from Aeromonas salmonicida (strain A449).